The following is a 467-amino-acid chain: ADP-dependent glucose/glucosamine kinase (467 aa).

Residues 10–467 form the ADPK domain; sequence RLWKRLYVNA…FVSEFGMRKR (458 aa). D-glucose contacts are provided by residues Asp42, Glu96, Gly120, 120–121, His184, and Asp211; that span reads GQ. Glu279 is a Mg(2+) binding site. Residue Asn305 coordinates ADP. A Mg(2+)-binding site is contributed by Glu308. ADP contacts are provided by residues 352 to 353, Val440, and Gly450; that span reads HT. Asp451 serves as a coordination point for D-glucose. Asp451 contributes to the Mg(2+) binding site. Asp451 acts as the Proton acceptor in catalysis.

Belongs to the ADP-dependent glucokinase family. Monomer. It depends on Mg(2+) as a cofactor.

The protein resides in the cytoplasm. The enzyme catalyses D-glucose + ADP = D-glucose 6-phosphate + AMP + H(+). It carries out the reaction D-glucosamine + ADP = D-glucosamine 6-phosphate + AMP + H(+). The protein operates within carbohydrate degradation; glycolysis. In terms of biological role, catalyzes the ADP-dependent phosphorylation of D-glucose to D-glucose 6-phosphate and glucosamine to glucosamine 6-phosphate. Can also use CDP as the phosphoryl group donor and D-1,5-anhydroglucitol as the phosphoryl group acceptor. The polypeptide is ADP-dependent glucose/glucosamine kinase (Thermococcus litoralis (strain ATCC 51850 / DSM 5473 / JCM 8560 / NS-C)).